A 369-amino-acid polypeptide reads, in one-letter code: S-(hydroxymethyl)glutathione dehydrogenase (369 aa).

Zn(2+) is bound by residues Cys40, His62, Cys92, Cys95, Cys98, Cys106, and Cys169.

It belongs to the zinc-containing alcohol dehydrogenase family. Class-III subfamily. As to quaternary structure, homodimer. The cofactor is Zn(2+).

It localises to the cytoplasm. The enzyme catalyses S-(hydroxymethyl)glutathione + NADP(+) = S-formylglutathione + NADPH + H(+). The catalysed reaction is S-(hydroxymethyl)glutathione + NAD(+) = S-formylglutathione + NADH + H(+). It carries out the reaction a primary alcohol + NAD(+) = an aldehyde + NADH + H(+). It catalyses the reaction a secondary alcohol + NAD(+) = a ketone + NADH + H(+). The enzyme catalyses S-nitrosoglutathione + NADH + H(+) = S-(hydroxysulfenamide)glutathione + NAD(+). Functionally, has high formaldehyde dehydrogenase activity in the presence of glutathione and catalyzes the oxidation of normal alcohols in a reaction that is not GSH-dependent. In addition, hemithiolacetals other than those formed from GSH, including omega-thiol fatty acids, also are substrates. Also acts as a S-nitroso-glutathione reductase by catalyzing the NADH-dependent reduction of S-nitrosoglutathione. This chain is S-(hydroxymethyl)glutathione dehydrogenase (frmA), found in Escherichia coli (strain SMS-3-5 / SECEC).